We begin with the raw amino-acid sequence, 65 residues long: Large ribosomal subunit protein bL35 (65 aa).

Belongs to the bacterial ribosomal protein bL35 family.

The protein is Large ribosomal subunit protein bL35 of Parabacteroides distasonis (strain ATCC 8503 / DSM 20701 / CIP 104284 / JCM 5825 / NCTC 11152).